The chain runs to 217 residues: Deoxyribose-phosphate aldolase 1 (217 aa).

Residue aspartate 89 is the Proton donor/acceptor of the active site. Catalysis depends on lysine 151, which acts as the Schiff-base intermediate with acetaldehyde. The active-site Proton donor/acceptor is lysine 180.

It belongs to the DeoC/FbaB aldolase family. DeoC type 1 subfamily.

Its subcellular location is the cytoplasm. The enzyme catalyses 2-deoxy-D-ribose 5-phosphate = D-glyceraldehyde 3-phosphate + acetaldehyde. It functions in the pathway carbohydrate degradation; 2-deoxy-D-ribose 1-phosphate degradation; D-glyceraldehyde 3-phosphate and acetaldehyde from 2-deoxy-alpha-D-ribose 1-phosphate: step 2/2. Its function is as follows. Catalyzes a reversible aldol reaction between acetaldehyde and D-glyceraldehyde 3-phosphate to generate 2-deoxy-D-ribose 5-phosphate. The protein is Deoxyribose-phosphate aldolase 1 of Cutibacterium acnes (strain DSM 16379 / KPA171202) (Propionibacterium acnes).